Consider the following 185-residue polypeptide: Ribosome-recycling factor (185 aa).

The protein belongs to the RRF family.

It localises to the cytoplasm. In terms of biological role, responsible for the release of ribosomes from messenger RNA at the termination of protein biosynthesis. May increase the efficiency of translation by recycling ribosomes from one round of translation to another. The polypeptide is Ribosome-recycling factor (Pseudomonas paraeruginosa (strain DSM 24068 / PA7) (Pseudomonas aeruginosa (strain PA7))).